The following is a 633-amino-acid chain: Pescadillo homolog (633 aa).

Residues 321–414 enclose the BRCT domain; it reads RLRTLFKGLK…QLLPTNKYFL (94 aa). Disordered stretches follow at residues 450–470 and 490–567; these read HAQS…DTVE and KKYG…LQAR. Phosphoserine occurs at positions 453 and 457. Composition is skewed to acidic residues over residues 454-470 and 498-526; these read EDES…DTVE and VNED…EELD. Positions 527 to 538 are enriched in basic and acidic residues; that stretch reads EKEKRLLEEKQK. The span at 545–554 shows a compositional bias: basic residues; sequence KVHKVNKRQV. The segment covering 555–564 has biased composition (basic and acidic residues); the sequence is HKAEVDEHRL. Residues 593–626 adopt a coiled-coil conformation; that stretch reads LLRKKRRTIETDAKEAKKLAKREARKAAAAAAAA.

It belongs to the pescadillo family.

The protein resides in the nucleus. The protein localises to the nucleolus. It is found in the nucleoplasm. Its function is as follows. Required for maturation of ribosomal RNAs and formation of the large ribosomal subunit. This Drosophila virilis (Fruit fly) protein is Pescadillo homolog.